The primary structure comprises 309 residues: Small ribosomal subunit protein mS23 (309 aa).

It belongs to the mitochondrion-specific ribosomal protein mS23 family. As to quaternary structure, component of the mitochondrial small ribosomal subunit.

The protein resides in the mitochondrion. The chain is Small ribosomal subunit protein mS23 (RSM25) from Lodderomyces elongisporus (strain ATCC 11503 / CBS 2605 / JCM 1781 / NBRC 1676 / NRRL YB-4239) (Yeast).